The chain runs to 367 residues: 3-isopropylmalate dehydrogenase (367 aa).

Residue 80–93 coordinates NAD(+); that stretch reads GKEWTHLPADEQPE. Substrate-binding residues include Arg101, Arg111, Arg140, and Asp230. Positions 230, 254, and 258 each coordinate Mg(2+). 288-300 lines the NAD(+) pocket; that stretch reads GSAPDLKGKNIAN.

This sequence belongs to the isocitrate and isopropylmalate dehydrogenases family. LeuB type 1 subfamily. Homodimer. Mg(2+) is required as a cofactor. Mn(2+) serves as cofactor.

Its subcellular location is the cytoplasm. It catalyses the reaction (2R,3S)-3-isopropylmalate + NAD(+) = 4-methyl-2-oxopentanoate + CO2 + NADH. It participates in amino-acid biosynthesis; L-leucine biosynthesis; L-leucine from 3-methyl-2-oxobutanoate: step 3/4. In terms of biological role, catalyzes the oxidation of 3-carboxy-2-hydroxy-4-methylpentanoate (3-isopropylmalate) to 3-carboxy-4-methyl-2-oxopentanoate. The product decarboxylates to 4-methyl-2 oxopentanoate. The protein is 3-isopropylmalate dehydrogenase (leuB) of Buchnera aphidicola subsp. Cinara cedri (strain Cc).